The chain runs to 128 residues: Profilin (128 aa).

The protein belongs to the profilin family.

More likely to influence phosphoinositide metabolism than actin assembly. This is Profilin from Homo sapiens (Human).